Reading from the N-terminus, the 363-residue chain is 3-isopropylmalate dehydrogenase (363 aa).

Position 79–92 (79–92 (GPKWEHLPPNDQPE)) interacts with NAD(+). Residues R100, R110, R139, and D228 each coordinate substrate. Mg(2+) is bound by residues D228, D252, and D256. Residue 286–298 (GSAPDIAGKNIAN) coordinates NAD(+).

Belongs to the isocitrate and isopropylmalate dehydrogenases family. LeuB type 1 subfamily. In terms of assembly, homodimer. Requires Mg(2+) as cofactor. Mn(2+) is required as a cofactor.

It is found in the cytoplasm. It carries out the reaction (2R,3S)-3-isopropylmalate + NAD(+) = 4-methyl-2-oxopentanoate + CO2 + NADH. The protein operates within amino-acid biosynthesis; L-leucine biosynthesis; L-leucine from 3-methyl-2-oxobutanoate: step 3/4. In terms of biological role, catalyzes the oxidation of 3-carboxy-2-hydroxy-4-methylpentanoate (3-isopropylmalate) to 3-carboxy-4-methyl-2-oxopentanoate. The product decarboxylates to 4-methyl-2 oxopentanoate. The protein is 3-isopropylmalate dehydrogenase of Vibrio parahaemolyticus serotype O3:K6 (strain RIMD 2210633).